Consider the following 422-residue polypeptide: UPF0597 protein Kole_0595 (422 aa).

It belongs to the UPF0597 family.

The polypeptide is UPF0597 protein Kole_0595 (Kosmotoga olearia (strain ATCC BAA-1733 / DSM 21960 / TBF 19.5.1)).